The primary structure comprises 257 residues: MAQRMTTQLLLLLVWVAVVGEAQTRIAWARTELLNVCMNAKHHKEKPGPEDKLHEQCRPWRKNACCSTNTSQEAHKDVSYLYRFNWNHCGEMAPACKRHFIQDTCLYECSPNLGPWIQQVDQSWRKERVLNVPLCKEDCEQWWEDCRTSYTCKSNWHKGWNWTSGFNKCAVGAACQPFHFYFPTPTVLCNEIWTHSYKVSNYSRGSGRCIQMWFDPAQGNPNEEVARFYAAAMSGAGPWAAWPFLLSLALMLLWLLS.

A signal peptide spans 1-24; sequence MAQRMTTQLLLLLVWVAVVGEAQT. Disulfide bonds link cysteine 37–cysteine 65, cysteine 57–cysteine 105, cysteine 66–cysteine 109, cysteine 89–cysteine 175, cysteine 96–cysteine 146, cysteine 135–cysteine 209, cysteine 139–cysteine 189, and cysteine 152–cysteine 169. Residue asparagine 69 is glycosylated (N-linked (GlcNAc...) asparagine). Residues aspartate 103, tyrosine 107, 124 to 128, 157 to 162, and serine 196 contribute to the folate site; these read WRKER and HKGWNW. N-linked (GlcNAc...) asparagine glycosylation occurs at asparagine 161. An N-linked (GlcNAc...) asparagine glycan is attached at asparagine 201. Serine 234 is lipidated: GPI-anchor amidated serine. A propeptide spans 235–257 (removed in mature form); the sequence is GAGPWAAWPFLLSLALMLLWLLS.

This sequence belongs to the folate receptor family. In terms of processing, the secreted form is derived from the membrane-bound form either by cleavage of the GPI anchor, or/and by proteolysis catalyzed by a metalloprotease. In terms of tissue distribution, primarily expressed in tissues of epithelial origin. Expression is increased in malignant tissues. Expressed in kidney, lung and cerebellum. Detected in placenta and thymus epithelium.

The protein resides in the cell membrane. It is found in the apical cell membrane. The protein localises to the basolateral cell membrane. Its subcellular location is the secreted. It localises to the cytoplasmic vesicle. The protein resides in the clathrin-coated vesicle. It is found in the endosome. Binds to folate and reduced folic acid derivatives and mediates delivery of 5-methyltetrahydrofolate and folate analogs into the interior of cells. Has high affinity for folate and folic acid analogs at neutral pH. Exposure to slightly acidic pH after receptor endocytosis triggers a conformation change that strongly reduces its affinity for folates and mediates their release. Required for normal embryonic development and normal cell proliferation. In Homo sapiens (Human), this protein is Folate receptor alpha (FOLR1).